A 132-amino-acid chain; its full sequence is Fumarate reductase subunit C (132 aa).

3 helical membrane passes run 30 to 50, 70 to 90, and 110 to 130; these read ATSV…LCFA, IVVF…VTYF, and VVRN…LVLV.

The protein belongs to the FrdC family. As to quaternary structure, part of an enzyme complex containing four subunits: a flavoprotein (FrdA), an iron-sulfur protein (FrdB), and two hydrophobic anchor proteins (FrdC and FrdD).

The protein resides in the cell inner membrane. Anchors the catalytic components of the fumarate reductase complex to the cell membrane, binds quinones. This Haemophilus influenzae (strain ATCC 51907 / DSM 11121 / KW20 / Rd) protein is Fumarate reductase subunit C.